Here is an 886-residue protein sequence, read N- to C-terminus: Isoleucine--tRNA ligase (886 aa).

The short motif at 60–70 (PYANGDIHIGH) is the 'HIGH' region element. Glu546 provides a ligand contact to L-isoleucyl-5'-AMP. Positions 587–591 (KMSKS) match the 'KMSKS' region motif. Lys590 contributes to the ATP binding site. Zn(2+) is bound by residues Cys856, Cys859, Cys870, and Cys873.

It belongs to the class-I aminoacyl-tRNA synthetase family. IleS type 1 subfamily. Monomer. It depends on Zn(2+) as a cofactor.

Its subcellular location is the cytoplasm. The catalysed reaction is tRNA(Ile) + L-isoleucine + ATP = L-isoleucyl-tRNA(Ile) + AMP + diphosphate. Functionally, catalyzes the attachment of isoleucine to tRNA(Ile). As IleRS can inadvertently accommodate and process structurally similar amino acids such as valine, to avoid such errors it has two additional distinct tRNA(Ile)-dependent editing activities. One activity is designated as 'pretransfer' editing and involves the hydrolysis of activated Val-AMP. The other activity is designated 'posttransfer' editing and involves deacylation of mischarged Val-tRNA(Ile). The sequence is that of Isoleucine--tRNA ligase from Mesomycoplasma hyopneumoniae (strain J / ATCC 25934 / NCTC 10110) (Mycoplasma hyopneumoniae).